The following is an 823-amino-acid chain: Putative E3 ubiquitin-protein ligase RF4 (823 aa).

Disordered regions lie at residues 24–72 (TVSP…NGSV), 224–291 (SKLS…CSGS), and 432–464 (ESVT…SEEK). Residues 61–72 (KPQNHLSGNGSV) are compositionally biased toward polar residues. The segment covering 224-240 (SKLSDSESLGAESNPPK) has biased composition (low complexity). Over residues 267 to 282 (FPNTPNSKKTQSSGTT) the composition is skewed to polar residues. The segment covering 453-464 (SEKKSGSESEEK) has biased composition (basic and acidic residues). Residues 536-738 (ELKALRKERE…ELKLKSDYSR (203 aa)) adopt a coiled-coil conformation. The RING-type zinc-finger motif lies at 768–808 (CVMCLSEEMSVIFLPCAHQVLCFKCNQLHEKEGMMDCPSCR).

Belongs to the RING-type zinc finger family.

The enzyme catalyses S-ubiquitinyl-[E2 ubiquitin-conjugating enzyme]-L-cysteine + [acceptor protein]-L-lysine = [E2 ubiquitin-conjugating enzyme]-L-cysteine + N(6)-ubiquitinyl-[acceptor protein]-L-lysine.. It participates in protein modification; protein ubiquitination. In Arabidopsis thaliana (Mouse-ear cress), this protein is Putative E3 ubiquitin-protein ligase RF4 (RF4).